The following is a 98-amino-acid chain: NADH-ubiquinone oxidoreductase chain 4L (98 aa).

2 helical membrane-spanning segments follow: residues Met-1 to Leu-21 and Pro-48 to Ala-68.

This sequence belongs to the complex I subunit 4L family. Core subunit of respiratory chain NADH dehydrogenase (Complex I) which is composed of 45 different subunits.

It is found in the mitochondrion inner membrane. It catalyses the reaction a ubiquinone + NADH + 5 H(+)(in) = a ubiquinol + NAD(+) + 4 H(+)(out). Core subunit of the mitochondrial membrane respiratory chain NADH dehydrogenase (Complex I) which catalyzes electron transfer from NADH through the respiratory chain, using ubiquinone as an electron acceptor. Part of the enzyme membrane arm which is embedded in the lipid bilayer and involved in proton translocation. The protein is NADH-ubiquinone oxidoreductase chain 4L (mt-nd4l) of Xenopus laevis (African clawed frog).